A 180-amino-acid polypeptide reads, in one-letter code: Large ribosomal subunit protein uL5 (180 aa).

The protein belongs to the universal ribosomal protein uL5 family. Part of the 50S ribosomal subunit; part of the 5S rRNA/L5/L18/L25 subcomplex. Contacts the 5S rRNA and the P site tRNA. Forms a bridge to the 30S subunit in the 70S ribosome.

Functionally, this is one of the proteins that bind and probably mediate the attachment of the 5S RNA into the large ribosomal subunit, where it forms part of the central protuberance. In the 70S ribosome it contacts protein S13 of the 30S subunit (bridge B1b), connecting the 2 subunits; this bridge is implicated in subunit movement. Contacts the P site tRNA; the 5S rRNA and some of its associated proteins might help stabilize positioning of ribosome-bound tRNAs. The chain is Large ribosomal subunit protein uL5 from Clostridium botulinum (strain Loch Maree / Type A3).